The following is a 303-amino-acid chain: Hemolysin E, chromosomal (303 aa).

C87 and C285 form a disulfide bridge. Residues 183-203 traverse the membrane as a helical segment; it reads AGVVAGPFGLIISYSIAAGVV.

As to quaternary structure, monomer and oligomer. In periplasm, it is present as a monomer, while in outer membrane vesicles, it oligomerizes to form a pore structure that is active. The pore is formed by a dodecamer. In periplasm, it forms a disulfide bond between Cys-87 and Cys-285, which prevents the oligomerization. In outer membrane vesicles, the redox status prevents formation of the disulfide bond, leading to oligomerization and pore formation.

Its subcellular location is the secreted. The protein resides in the periplasm. It is found in the host cell membrane. Its function is as follows. Toxin, which has some hemolytic activity towards mammalian cells. Acts by forming a pore-like structure upon contact with mammalian cells. The chain is Hemolysin E, chromosomal (hlyE) from Escherichia coli (strain K12).